The chain runs to 839 residues: Taste receptor type 1 member 2 (839 aa).

The first 19 residues, 1–19 (MGPRAKTISSLFFLLWVLA), serve as a signal peptide directing secretion. Over 20-566 (EPAENSDFYL…VFLEWHEAPT (547 aa)) the chain is Extracellular. N-linked (GlcNAc...) asparagine glycans are attached at residues Asn-84, Asn-248, Asn-292, Asn-312, Asn-368, Asn-428, Asn-487, and Asn-527. Residues 567–587 (IAVALLAALGFLSTLAILVIF) traverse the membrane as a helical segment. Residues 588 to 602 (WRHFQTPIVRSAGGP) lie on the Cytoplasmic side of the membrane. Residues 603–623 (MCFLMLTLLLVAYMVVPVYVG) traverse the membrane as a helical segment. Topologically, residues 624-635 (PPKVSTCLCRQA) are extracellular. A helical transmembrane segment spans residues 636–656 (LFPLCFTICISCIAVRSFQIV). The Cytoplasmic segment spans residues 657–681 (CAFKMASRFPRAYSYWVRYQGPYVS). Residues 682-702 (MAFITVLKMVIVVIGMLATGL) form a helical membrane-spanning segment. The Extracellular segment spans residues 703–727 (SPTTRTDPDDPKITIVSCNPNYRNS). Residues 728–748 (LLFNTSLDLLLSVVGFSFAYM) form a helical membrane-spanning segment. The Cytoplasmic segment spans residues 749–760 (GKELPTNYNEAK). A helical membrane pass occupies residues 761 to 781 (FITLSMTFYFTSSVSLCTFMS). At 782–784 (AYS) the chain is on the extracellular side. A helical transmembrane segment spans residues 785-805 (GVLVTIVDLLVTVLNLLAISL). The Cytoplasmic portion of the chain corresponds to 806–839 (GYFGPKCYMILFYPERNTPAYFNSMIQGYTMRRD).

It belongs to the G-protein coupled receptor 3 family. TAS1R subfamily. Forms heterodimers with TAS1R3.

Its subcellular location is the cell membrane. Its function is as follows. Putative taste receptor. TAS1R2/TAS1R3 recognizes diverse natural and synthetic sweeteners. The polypeptide is Taste receptor type 1 member 2 (TAS1R2) (Homo sapiens (Human)).